Consider the following 109-residue polypeptide: Antifungal protein ginkbilobin-like protein (109 aa).

A Gnk2-homologous domain is found at 4 to 109 (TNFVSSACNT…CFIQYEQHSF (106 aa)). Intrachain disulfides connect Cys-11–Cys-87, Cys-63–Cys-72, and Cys-75–Cys-100. An alpha-D-mannopyranose-binding site is contributed by Asn-12. Positions 94 and 105 each coordinate alpha-D-mannopyranose.

Exerts antifungal activity through its carbohydrate-binding specificity. In Picea abies (Norway spruce), this protein is Antifungal protein ginkbilobin-like protein.